Here is a 162-residue protein sequence, read N- to C-terminus: RNA pyrophosphohydrolase (162 aa).

Residues Pro-11–Ala-155 enclose the Nudix hydrolase domain. The Nudix box motif lies at Gly-45–Gly-66.

Belongs to the Nudix hydrolase family. RppH subfamily. It depends on a divalent metal cation as a cofactor.

Functionally, accelerates the degradation of transcripts by removing pyrophosphate from the 5'-end of triphosphorylated RNA, leading to a more labile monophosphorylated state that can stimulate subsequent ribonuclease cleavage. The protein is RNA pyrophosphohydrolase of Cereibacter sphaeroides (strain ATCC 17029 / ATH 2.4.9) (Rhodobacter sphaeroides).